Here is a 185-residue protein sequence, read N- to C-terminus: Large ribosomal subunit protein bL25 (185 aa).

Belongs to the bacterial ribosomal protein bL25 family. CTC subfamily. Part of the 50S ribosomal subunit; part of the 5S rRNA/L5/L18/L25 subcomplex. Contacts the 5S rRNA. Binds to the 5S rRNA independently of L5 and L18.

Functionally, this is one of the proteins that binds to the 5S RNA in the ribosome where it forms part of the central protuberance. This is Large ribosomal subunit protein bL25 from Chlamydia abortus (strain DSM 27085 / S26/3) (Chlamydophila abortus).